A 267-amino-acid polypeptide reads, in one-letter code: Thiazole synthase (267 aa).

K107 functions as the Schiff-base intermediate with DXP in the catalytic mechanism. 1-deoxy-D-xylulose 5-phosphate-binding positions include G168, 194–195 (AG), and 216–217 (NT).

The protein belongs to the ThiG family. As to quaternary structure, homotetramer. Forms heterodimers with either ThiH or ThiS.

The protein resides in the cytoplasm. The catalysed reaction is [ThiS sulfur-carrier protein]-C-terminal-Gly-aminoethanethioate + 2-iminoacetate + 1-deoxy-D-xylulose 5-phosphate = [ThiS sulfur-carrier protein]-C-terminal Gly-Gly + 2-[(2R,5Z)-2-carboxy-4-methylthiazol-5(2H)-ylidene]ethyl phosphate + 2 H2O + H(+). Its pathway is cofactor biosynthesis; thiamine diphosphate biosynthesis. In terms of biological role, catalyzes the rearrangement of 1-deoxy-D-xylulose 5-phosphate (DXP) to produce the thiazole phosphate moiety of thiamine. Sulfur is provided by the thiocarboxylate moiety of the carrier protein ThiS. In vitro, sulfur can be provided by H(2)S. In Aquifex aeolicus (strain VF5), this protein is Thiazole synthase.